The primary structure comprises 224 residues: uncharacterized protein (224 aa).

This is an uncharacterized protein from Acidianus hospitalis (AFV-1).